The primary structure comprises 217 residues: ATP synthase subunit a (217 aa).

A run of 6 helical transmembrane segments spans residues 5-25 (EHVI…LAAG), 63-83 (LIAS…LPFV), 89-109 (NINT…FEGF), 120-140 (FMGP…MSHL), 157-177 (GAIL…TLAV), and 191-213 (LAIV…GAVV).

It belongs to the ATPase A chain family. In terms of assembly, F-type ATPases have 2 components, CF(1) - the catalytic core - and CF(0) - the membrane proton channel. CF(1) has five subunits: alpha(3), beta(3), gamma(1), delta(1), epsilon(1). CF(0) has three main subunits: a(1), b(2) and c(9-12). The alpha and beta chains form an alternating ring which encloses part of the gamma chain. CF(1) is attached to CF(0) by a central stalk formed by the gamma and epsilon chains, while a peripheral stalk is formed by the delta and b chains.

The protein localises to the cell inner membrane. Its function is as follows. Key component of the proton channel; it plays a direct role in the translocation of protons across the membrane. The protein is ATP synthase subunit a of Hydrogenobaculum sp. (strain Y04AAS1).